Consider the following 407-residue polypeptide: tRNA (uracil(54)-C(5))-methyltransferase (407 aa).

Positions 61, 67, 70, and 137 each coordinate [4Fe-4S] cluster. S-adenosyl-L-methionine contacts are provided by residues glutamine 253, tyrosine 279, threonine 284, 300–301, aspartate 327, and aspartate 341; that span reads DS. The Nucleophile role is filled by cysteine 368. Catalysis depends on glutamate 400, which acts as the Proton acceptor.

The protein belongs to the class I-like SAM-binding methyltransferase superfamily. RNA M5U methyltransferase family.

The enzyme catalyses uridine(54) in tRNA + S-adenosyl-L-methionine = 5-methyluridine(54) in tRNA + S-adenosyl-L-homocysteine + H(+). Catalyzes the formation of 5-methyl-uridine at position 54 (m5U54) in tRNA. The chain is tRNA (uracil(54)-C(5))-methyltransferase from Pyrococcus horikoshii (strain ATCC 700860 / DSM 12428 / JCM 9974 / NBRC 100139 / OT-3).